We begin with the raw amino-acid sequence, 155 residues long: Ribosomal RNA large subunit methyltransferase H (155 aa).

Residues leucine 73, glycine 104, and 123-128 (LSRMTF) contribute to the S-adenosyl-L-methionine site.

The protein belongs to the RNA methyltransferase RlmH family. In terms of assembly, homodimer.

It localises to the cytoplasm. The catalysed reaction is pseudouridine(1915) in 23S rRNA + S-adenosyl-L-methionine = N(3)-methylpseudouridine(1915) in 23S rRNA + S-adenosyl-L-homocysteine + H(+). In terms of biological role, specifically methylates the pseudouridine at position 1915 (m3Psi1915) in 23S rRNA. This chain is Ribosomal RNA large subunit methyltransferase H, found in Methylococcus capsulatus (strain ATCC 33009 / NCIMB 11132 / Bath).